The following is an 86-amino-acid chain: Large ribosomal subunit protein bL27 (86 aa).

The protein belongs to the bacterial ribosomal protein bL27 family.

The sequence is that of Large ribosomal subunit protein bL27 from Cupriavidus metallidurans (strain ATCC 43123 / DSM 2839 / NBRC 102507 / CH34) (Ralstonia metallidurans).